Here is a 237-residue protein sequence, read N- to C-terminus: tRNA (guanine-N(7)-)-methyltransferase (237 aa).

Positions 35, 60, 87, and 113 each coordinate S-adenosyl-L-methionine. Aspartate 113 is a catalytic residue. Positions 117 and 149 each coordinate substrate.

It belongs to the class I-like SAM-binding methyltransferase superfamily. TrmB family.

The enzyme catalyses guanosine(46) in tRNA + S-adenosyl-L-methionine = N(7)-methylguanosine(46) in tRNA + S-adenosyl-L-homocysteine. It participates in tRNA modification; N(7)-methylguanine-tRNA biosynthesis. Its function is as follows. Catalyzes the formation of N(7)-methylguanine at position 46 (m7G46) in tRNA. This chain is tRNA (guanine-N(7)-)-methyltransferase, found in Synechococcus sp. (strain CC9311).